A 266-amino-acid chain; its full sequence is Type III pantothenate kinase (266 aa).

6 to 13 provides a ligand contact to ATP; that stretch reads DAGNTNIV. Residues Y100 and 107-110 each bind substrate; that span reads GADR. Catalysis depends on D109, which acts as the Proton acceptor. Residue D129 participates in K(+) binding. T132 is a binding site for ATP. T184 is a binding site for substrate.

Belongs to the type III pantothenate kinase family. In terms of assembly, homodimer. NH4(+) serves as cofactor. The cofactor is K(+).

Its subcellular location is the cytoplasm. The enzyme catalyses (R)-pantothenate + ATP = (R)-4'-phosphopantothenate + ADP + H(+). It functions in the pathway cofactor biosynthesis; coenzyme A biosynthesis; CoA from (R)-pantothenate: step 1/5. Functionally, catalyzes the phosphorylation of pantothenate (Pan), the first step in CoA biosynthesis. This chain is Type III pantothenate kinase, found in Clostridium beijerinckii (strain ATCC 51743 / NCIMB 8052) (Clostridium acetobutylicum).